The sequence spans 556 residues: Arginine--tRNA ligase (556 aa).

A 'HIGH' region motif is present at residues 132-142; the sequence is ANPTGDLHLGH.

The protein belongs to the class-I aminoacyl-tRNA synthetase family. In terms of assembly, monomer.

The protein localises to the cytoplasm. It catalyses the reaction tRNA(Arg) + L-arginine + ATP = L-arginyl-tRNA(Arg) + AMP + diphosphate. This is Arginine--tRNA ligase (argS) from Bacillus subtilis (strain 168).